A 469-amino-acid chain; its full sequence is Acetyl-CoA decarbonylase/synthase complex subunit beta 1 (469 aa).

Cys189, Cys192, Cys278, and Cys280 together coordinate [Ni-Fe-S] cluster.

The protein belongs to the CdhC family. In terms of assembly, monomer. The ACDS complex is made up of alpha, epsilon, beta, gamma and delta chains with a probable stoichiometry of (alpha(2)epsilon(2))(4)-beta(8)-(gamma(1)delta(1))(8) (Potential). Requires [Ni-Fe-S] cluster as cofactor.

It carries out the reaction Co(I)-[corrinoid Fe-S protein] + acetyl-CoA + H(+) = methyl-Co(III)-[corrinoid Fe-S protein] + CO + CoA. Its pathway is one-carbon metabolism; methanogenesis from acetate. Its function is as follows. Part of a complex that catalyzes the reversible cleavage of acetyl-CoA, allowing growth on acetate as sole source of carbon and energy. The alpha-epsilon complex generates CO from CO(2), while the beta subunit (this protein) combines the CO with CoA and a methyl group to form acetyl-CoA. The methyl group, which is incorporated into acetyl-CoA, is transferred to the beta subunit by a corrinoid iron-sulfur protein (the gamma-delta complex). This is Acetyl-CoA decarbonylase/synthase complex subunit beta 1 (cdhC1) from Methanosarcina mazei (strain ATCC BAA-159 / DSM 3647 / Goe1 / Go1 / JCM 11833 / OCM 88) (Methanosarcina frisia).